The primary structure comprises 171 residues: Laminin subunit beta-1 (171 aa).

Positions 1 to 29 (MNGRTQNLWFSTFRLVIVYALFFAKLCFG) are cleaved as a signal peptide. Disulfide bonds link Cys-59–Cys-69, Cys-72–Cys-81, Cys-84–Cys-100, Cys-103–Cys-118, and Cys-105–Cys-128. 3 Laminin EGF-like domains span residues 66 to 102 (TGVC…VCQR), 103 to 160 (CQCP…TCKK), and 161 to 171 (CLCNGNINSAS). Residue Asn-130 is glycosylated (N-linked (GlcNAc...) asparagine). 2 cysteine pairs are disulfide-bonded: Cys-131–Cys-140 and Cys-143–Cys-158.

In terms of assembly, laminin is a complex glycoprotein, consisting of three different polypeptide chains (alpha, beta, gamma), which are bound to each other by disulfide bonds into a cross-shaped molecule comprising one long and three short arms with globules at each end.

The protein localises to the secreted. The protein resides in the extracellular space. It is found in the extracellular matrix. Its subcellular location is the basement membrane. Binding to cells via a high affinity receptor, laminin is thought to mediate the attachment, migration and organization of cells into tissues during embryonic development by interacting with other extracellular matrix components. The sequence is that of Laminin subunit beta-1 from Hydra vulgaris (Hydra).